A 385-amino-acid chain; its full sequence is Centrosomal protein of 44 kDa (385 aa).

The binds with microtubules and centrioles stretch occupies residues 11-191; it reads RKLEQRLRTL…TKCYKSALLE (181 aa). The span at 194 to 204 shows a compositional bias: acidic residues; sequence EEEEPTSDCEE. The tract at residues 194-224 is disordered; it reads EEEEPTSDCEEDSHLQREMGSPFETAEETPN. Coiled-coil stretches lie at residues 224–263 and 353–379; these read NSEQ…KGKI and TEES…ELLK.

In terms of assembly, binds to centriolar microtubules.

The protein resides in the cytoplasm. It is found in the cytoskeleton. The protein localises to the microtubule organizing center. It localises to the centrosome. Its subcellular location is the centriole. The protein resides in the spindle pole. It is found in the midbody. Centriole-enriched microtubule-binding protein involved in centriole biogenesis. In collaboration with CEP295 and POC1B, is required for the centriole-to-centrosome conversion by ensuring the formation of bona fide centriole wall. Functions as a linker component that maintains centrosome cohesion. Associates with CROCC and regulates its stability and localization to the centrosome. The chain is Centrosomal protein of 44 kDa (cep44) from Xenopus tropicalis (Western clawed frog).